Consider the following 295-residue polypeptide: Putative clathrin assembly protein At5g65370 (295 aa).

Residues 26–169 (CSSVNAKTID…SIAEVLGITP (144 aa)) enclose the ENTH domain.

It localises to the membrane. Its subcellular location is the clathrin-coated pit. The protein resides in the golgi apparatus. The protein localises to the cytoplasmic vesicle. It is found in the clathrin-coated vesicle. The polypeptide is Putative clathrin assembly protein At5g65370 (Arabidopsis thaliana (Mouse-ear cress)).